The chain runs to 204 residues: UPF0637 protein Lm4b_01081 (204 aa).

The protein belongs to the UPF0637 family.

The protein is UPF0637 protein Lm4b_01081 of Listeria monocytogenes serotype 4b (strain CLIP80459).